The following is a 222-amino-acid chain: Charged multivesicular body protein 2a (222 aa).

Met1 carries the N-acetylmethionine modification. Positions 12–53 (EELLRQNQRALNRAMRELDRERQKLETQEKKIIADIKKMAKQ) form a coiled coil. The tract at residues 56-222 (MDAVRIMAKD…EERLKNLRRD (167 aa)) is interaction with VPS4B. Residue Ser184 is modified to Phosphoserine. Thr185 is subject to Phosphothreonine. Ser188, Ser190, and Ser203 each carry phosphoserine. A coiled-coil region spans residues 195–222 (GKKAEAAASALADADADLEERLKNLRRD). Positions 210-220 (ADLEERLKNLR) match the MIT-interacting motif motif. The segment at 217–222 (KNLRRD) is interaction with VTA1.

This sequence belongs to the SNF7 family. Probable core component of the endosomal sorting required for transport complex III (ESCRT-III). ESCRT-III components are thought to multimerize to form a flat lattice on the perimeter membrane of the endosome. Several assembly forms of ESCRT-III may exist that interact and act sequentially. In vitro, heteromerizes with CHMP3 (but not CHMP4) to form helical tubular structures that expose membrane-interacting sites on the outside whereas VPS4B can associate on the inside of the tubule. Interacts with CHMP1B, CHMP2B, CHMP3, CHMP4A, CHMP4B, CHMP4C and CHMP5. Interacts with VPS4A; the interaction is direct. Interacts with VPS4B; the interaction is direct. Interacts with MITD1. Interacts with VTA1; the interaction probably involves the open conformation of CHMP2A. Post-translationally, ISGylated in a CHMP5-dependent manner. Isgylation weakens and inhibits its interactions with VPS4A and VTA1 respectively.

It localises to the late endosome membrane. The protein localises to the nucleus envelope. Its function is as follows. Probable core component of the endosomal sorting required for transport complex III (ESCRT-III) which is involved in multivesicular bodies (MVBs) formation and sorting of endosomal cargo proteins into MVBs. MVBs contain intraluminal vesicles (ILVs) that are generated by invagination and scission from the limiting membrane of the endosome and mostly are delivered to lysosomes enabling degradation of membrane proteins, such as stimulated growth factor receptors, lysosomal enzymes and lipids. The MVB pathway appears to require the sequential function of ESCRT-O, -I,-II and -III complexes. ESCRT-III proteins mostly dissociate from the invaginating membrane before the ILV is released. The ESCRT machinery also functions in topologically equivalent membrane fission events, such as the terminal stages of cytokinesis. Together with SPAST, the ESCRT-III complex promotes nuclear envelope sealing and mitotic spindle disassembly during late anaphase. Recruited to the reforming nuclear envelope (NE) during anaphase by LEMD2. ESCRT-III proteins are believed to mediate the necessary vesicle extrusion and/or membrane fission activities, possibly in conjunction with the AAA ATPase VPS4. (Microbial infection) The ESCRT machinery functions in topologically equivalent membrane fission events, such as the budding of enveloped viruses (HIV-1 and other lentiviruses). Involved in HIV-1 p6- and p9-dependent virus release. The protein is Charged multivesicular body protein 2a (CHMP2A) of Homo sapiens (Human).